The chain runs to 122 residues: E3 ubiquitin-protein ligase PPP1R11 (122 aa).

Residues 1-12 (MAEVPGTSSETI) are compositionally biased toward polar residues. The interval 1 to 33 (MAEVPGTSSETITETVQTGTPPPPQQEGRSLTI) is disordered. A Phosphothreonine modification is found at Thr-20. Positions 55–65 (HLGRRSSKCCC) are atypical RING finger domain 1. A disordered region spans residues 72-122 (QFGESSSESEGDDEEGCGSAHCILGHGRRGHGQREGGGTTVPPSSGGTNPH). Acidic residues predominate over residues 78–87 (SESEGDDEEG). The interval 88–97 (CGSAHCILGH) is atypical RING finger domain 2. Over residues 111-122 (TVPPSSGGTNPH) the composition is skewed to low complexity.

The catalysed reaction is S-ubiquitinyl-[E2 ubiquitin-conjugating enzyme]-L-cysteine + [acceptor protein]-L-lysine = [E2 ubiquitin-conjugating enzyme]-L-cysteine + N(6)-ubiquitinyl-[acceptor protein]-L-lysine.. The protein operates within protein modification; protein ubiquitination. Atypical E3 ubiquitin-protein ligase which ubiquitinates TLR2 at 'Lys-754' leading to its degradation by the proteasome. Inhibitor of protein phosphatase 1. In Danio rerio (Zebrafish), this protein is E3 ubiquitin-protein ligase PPP1R11 (ppp1r11).